A 441-amino-acid polypeptide reads, in one-letter code: ATP-dependent protease ATPase subunit HslU (441 aa).

ATP-binding positions include Ile-18, 60–65 (GVGKTE), Asp-254, Glu-319, and Arg-391.

It belongs to the ClpX chaperone family. HslU subfamily. In terms of assembly, a double ring-shaped homohexamer of HslV is capped on each side by a ring-shaped HslU homohexamer. The assembly of the HslU/HslV complex is dependent on binding of ATP.

It localises to the cytoplasm. Its function is as follows. ATPase subunit of a proteasome-like degradation complex; this subunit has chaperone activity. The binding of ATP and its subsequent hydrolysis by HslU are essential for unfolding of protein substrates subsequently hydrolyzed by HslV. HslU recognizes the N-terminal part of its protein substrates and unfolds these before they are guided to HslV for hydrolysis. The protein is ATP-dependent protease ATPase subunit HslU of Shewanella denitrificans (strain OS217 / ATCC BAA-1090 / DSM 15013).